We begin with the raw amino-acid sequence, 126 residues long: Protein ApaG (126 aa).

An ApaG domain is found at 2-126; sequence TSLEDSIKVE…FRLAVPGMLH (125 aa).

In Shewanella sediminis (strain HAW-EB3), this protein is Protein ApaG.